A 421-amino-acid polypeptide reads, in one-letter code: D-amino acid dehydrogenase (421 aa).

Residue 3–17 (ILILGSGVVGTASAY) participates in FAD binding.

Belongs to the DadA oxidoreductase family. FAD is required as a cofactor.

The catalysed reaction is a D-alpha-amino acid + A + H2O = a 2-oxocarboxylate + AH2 + NH4(+). It participates in amino-acid degradation; D-alanine degradation; NH(3) and pyruvate from D-alanine: step 1/1. Oxidative deamination of D-amino acids. This chain is D-amino acid dehydrogenase, found in Xanthobacter autotrophicus (strain ATCC BAA-1158 / Py2).